The primary structure comprises 2671 residues: Stalled ribosome sensor GCN1 (2671 aa).

Alanine 2 carries the post-translational modification N-acetylalanine. 10 HEAT repeats span residues asparagine 140 to glycine 178, glutamate 257 to serine 293, glutamine 294 to aspartate 331, isoleucine 385 to lysine 423, leucine 425 to leucine 459, leucine 460 to aspartate 503, asparagine 560 to glycine 597, lysine 599 to alanine 636, aspartate 697 to valine 732, and leucine 733 to alanine 770. Serine 729 carries the phosphoserine modification. The residue at position 786 (serine 786) is a Phosphoserine. Positions glutamine 804–aspartate 863 form a coiled coil. HEAT repeat units follow at residues valine 879–leucine 925, serine 979–leucine 1016, leucine 1035–glycine 1072, phenylalanine 1078–alanine 1115, aspartate 1155–arginine 1192, tyrosine 1210–serine 1250, serine 1251–lysine 1289, glutamate 1290–lysine 1332, proline 1335–glutamate 1372, alanine 1374–isoleucine 1410, leucine 1413–lysine 1451, proline 1455–alanine 1492, histidine 1493–lysine 1530, serine 1534–asparagine 1571, glutamate 1573–aspartate 1609, proline 1611–glutamine 1648, proline 1653–glutamate 1690, cysteine 1692–valine 1729, lysine 1731–aspartate 1769, proline 1773–glutamate 1810, alanine 1812–glycine 1848, glutamate 1921–glutamate 1958, lysine 1959–arginine 1996, tyrosine 2001–histidine 2038, glutamine 2039–valine 2076, proline 2078–threonine 2106, arginine 2107–aspartate 2146, threonine 2147–alanine 2184, serine 2188–alanine 2225, lysine 2259–alanine 2296, proline 2301–glycine 2338, isoleucine 2339–lysine 2380, aspartate 2382–alanine 2417, valine 2422–glutamate 2459, glutamine 2546–proline 2583, and glutamine 2588–glycine 2625. The segment at glycine 2260–leucine 2408 is RWDBD region. The residue at position 2276 (serine 2276) is a Phosphoserine. The HEAT 47; degenerate repeat unit spans residues glutamate 2627 to serine 2661.

Belongs to the GCN1 family. In terms of assembly, interacts with EIF2AK4/GCN2; this interaction stimulates the EIF2AK4/GCN2 kinase activity and is impaired by IMPACT upon a variety of stress conditions, such as amino acid depletion, UV-C irradiation, proteasome inhibitor treatment and glucose deprivation. Interacts with IMPACT; this prevents the interaction of GCN1 with EIF2AK4/GCN2 and inhibits EIF2AK4/GCN2 kinase activity. Interacts with RNF14; interaction takes place following ribosome stalling and promotes recruitment of RNF14. As to expression, ubiquitously expressed. Expressed in skeletal muscules, ovary and testis.

It localises to the cytoplasm. Functionally, ribosome collision sensor that plays a key role in the RNF14-RNF25 translation quality control pathway, a pathway that takes place when a ribosome has stalled during translation, and which promotes ubiquitination and degradation of translation factors on stalled ribosomes. Directly binds to the ribosome and acts as a sentinel for colliding ribosomes: activated following ribosome stalling and promotes recruitment of RNF14, which directly ubiquitinates EEF1A1/eEF1A, leading to its degradation. In addition to EEF1A1/eEF1A, the RNF14-RNF25 translation quality control pathway mediates degradation of ETF1/eRF1 and ubiquitination of ribosomal protein. GCN1 also acts as a positive activator of the integrated stress response (ISR) by mediating activation of EIF2AK4/GCN2 in response to amino acid starvation. Interaction with EIF2AK4/GCN2 on translating ribosomes stimulates EIF2AK4/GCN2 kinase activity, leading to phosphorylation of eukaryotic translation initiation factor 2 (eIF-2-alpha/EIF2S1). EIF2S1/eIF-2-alpha phosphorylation converts EIF2S1/eIF-2-alpha into a global protein synthesis inhibitor, leading to a global attenuation of cap-dependent translation, and thus to a reduced overall utilization of amino acids, while concomitantly initiating the preferential translation of ISR-specific mRNAs, such as the transcriptional activator ATF4, and hence allowing ATF4-mediated reprogramming of amino acid biosynthetic gene expression to alleviate nutrient depletion. This chain is Stalled ribosome sensor GCN1, found in Homo sapiens (Human).